Reading from the N-terminus, the 468-residue chain is Probable cytosol aminopeptidase (468 aa).

2 residues coordinate Mn(2+): Lys-242 and Asp-247. Residue Lys-254 is part of the active site. Residues Asp-265, Asp-324, and Glu-326 each coordinate Mn(2+). Arg-328 is a catalytic residue.

Belongs to the peptidase M17 family. Mn(2+) serves as cofactor.

It localises to the cytoplasm. The enzyme catalyses Release of an N-terminal amino acid, Xaa-|-Yaa-, in which Xaa is preferably Leu, but may be other amino acids including Pro although not Arg or Lys, and Yaa may be Pro. Amino acid amides and methyl esters are also readily hydrolyzed, but rates on arylamides are exceedingly low.. The catalysed reaction is Release of an N-terminal amino acid, preferentially leucine, but not glutamic or aspartic acids.. Its function is as follows. Presumably involved in the processing and regular turnover of intracellular proteins. Catalyzes the removal of unsubstituted N-terminal amino acids from various peptides. In Neisseria meningitidis serogroup A / serotype 4A (strain DSM 15465 / Z2491), this protein is Probable cytosol aminopeptidase.